Reading from the N-terminus, the 128-residue chain is Mu-like prophage FluMu protein gp35 (128 aa).

The disordered stretch occupies residues 53–87 (TETGSQEGGEGLSKEPAGSDEQKQLRADPPSTDLN).

The protein to phage Mu protein gp35. Monomer.

This is Mu-like prophage FluMu protein gp35 from Haemophilus influenzae (strain ATCC 51907 / DSM 11121 / KW20 / Rd).